The chain runs to 405 residues: MSTEKSLLANAAGGSLVLQIFVGIIAGVALAGFSPEAANQVAFLGDLFVGALKAIAPVLVFVLVASSIANQVSGAQTNMRPIILLYLVGTFAAALTAVLMSFAFPTSLVLIDAAAGANPPEGIGQVLNTLLFKLVDNPVNALINANYIGLLAWGVGLGIALRHASTSTKNMLHDVSHGVSQLVRFVICLAPIGIFGLVAATIAQTGFEALAAYAQLLGVLLGAMAVIAFVVNPLIVFLKIRRNPYPLVFKCLRESGVTAFFTRSSAANIPVNMALCERLKLHEDTYSVSIPLGATINMAGAAITITVLTLAAVHTLGIEVDLATALLLSVIAAVSACGASGVAGGSLLLIPLACSLFGISNDIAMQVVAVGFTIGVIQDSAETALNSSTDVLFTAAACEAAERKA.

Transmembrane regions (helical) follow at residues 13–33 (GGSL…LAGF), 43–63 (FLGD…VFVL), 82–102 (IILL…LMSF), 141–161 (ALIN…GIAL), 185–205 (FVIC…IAQT), 217–237 (LGVL…LIVF), 298–318 (MAGA…TLGI), and 339–359 (ASGV…LFGI).

The protein belongs to the dicarboxylate/amino acid:cation symporter (DAACS) (TC 2.A.23) family.

It localises to the cell inner membrane. The catalysed reaction is L-serine(in) + Na(+)(in) = L-serine(out) + Na(+)(out). It carries out the reaction L-threonine(in) + Na(+)(in) = L-threonine(out) + Na(+)(out). In terms of biological role, involved in the import of serine and threonine into the cell, with the concomitant import of sodium (symport system). This chain is Serine/threonine transporter SstT, found in Shewanella amazonensis (strain ATCC BAA-1098 / SB2B).